A 208-amino-acid polypeptide reads, in one-letter code: Urease accessory protein UreG (208 aa).

10–17 (GPVGSGKT) is a binding site for GTP.

The protein belongs to the SIMIBI class G3E GTPase family. UreG subfamily. As to quaternary structure, homodimer. UreD, UreF and UreG form a complex that acts as a GTP-hydrolysis-dependent molecular chaperone, activating the urease apoprotein by helping to assemble the nickel containing metallocenter of UreC. The UreE protein probably delivers the nickel.

The protein localises to the cytoplasm. Facilitates the functional incorporation of the urease nickel metallocenter. This process requires GTP hydrolysis, probably effectuated by UreG. In Halalkalibacterium halodurans (strain ATCC BAA-125 / DSM 18197 / FERM 7344 / JCM 9153 / C-125) (Bacillus halodurans), this protein is Urease accessory protein UreG.